A 60-amino-acid chain; its full sequence is UI (60 aa).

The span at 1 to 14 (AAAAGDSAASDLLG) shows a compositional bias: low complexity. Residues 1–22 (AAAAGDSAASDLLGDNILRSED) form a disordered region. The residue at position 60 (valine 60) is a Valine amide.

Belongs to the sauvagine/corticotropin-releasing factor/urotensin I family.

The protein resides in the secreted. In terms of biological role, urotensin is found in the teleost caudal neurosecretory system. It has a suggested role in osmoregulation and as a corticotropin-releasing factor. The non-hormonal portion of this precursor may be a urotensin binding protein, urophysin. In Platichthys flesus (European flounder), this protein is UI.